A 190-amino-acid chain; its full sequence is Hypoxanthine/guanine phosphoribosyltransferase (190 aa).

It belongs to the purine/pyrimidine phosphoribosyltransferase family. Archaeal HPRT subfamily. As to quaternary structure, homodimer.

It is found in the cytoplasm. It catalyses the reaction IMP + diphosphate = hypoxanthine + 5-phospho-alpha-D-ribose 1-diphosphate. The catalysed reaction is GMP + diphosphate = guanine + 5-phospho-alpha-D-ribose 1-diphosphate. The protein operates within purine metabolism; IMP biosynthesis via salvage pathway; IMP from hypoxanthine: step 1/1. Functionally, catalyzes a salvage reaction resulting in the formation of IMP that is energically less costly than de novo synthesis. The protein is Hypoxanthine/guanine phosphoribosyltransferase of Methanohalophilus mahii (strain ATCC 35705 / DSM 5219 / SLP).